Here is a 198-residue protein sequence, read N- to C-terminus: Holliday junction resolvase RecU (198 aa).

A disordered region spans residues 1 to 22 (MVNYPHKVSSQKRQTSLSQPKN). Over residues 11–22 (QKRQTSLSQPKN) the composition is skewed to polar residues. The Mg(2+) site is built by threonine 81, aspartate 83, glutamate 96, and glutamine 115.

The protein belongs to the RecU family. It depends on Mg(2+) as a cofactor.

It localises to the cytoplasm. It carries out the reaction Endonucleolytic cleavage at a junction such as a reciprocal single-stranded crossover between two homologous DNA duplexes (Holliday junction).. Its function is as follows. Endonuclease that resolves Holliday junction intermediates in genetic recombination. Cleaves mobile four-strand junctions by introducing symmetrical nicks in paired strands. Promotes annealing of linear ssDNA with homologous dsDNA. Required for DNA repair, homologous recombination and chromosome segregation. This chain is Holliday junction resolvase RecU, found in Streptococcus pneumoniae serotype 2 (strain D39 / NCTC 7466).